Here is a 1067-residue protein sequence, read N- to C-terminus: MASPTSTNPAHAHFESFLQAQLCQDVLSSFQELCGALGLEPGGGLPQYHKIKDQLNYWSAKSLWTKLDKRAGQPVYQQGRACTSTKCLVVGAGPCGLRVAVELALLGARVVLVEKRTKFSRHNVLHLWPFTIHDLRALGAKKFYGRFCTGTLDHISIRQLQLLLLKVALLLGVEIHWGVTFTGLQPPPRKGSGWRAQLQPNPPAQLANYEFDVLISAAGGKFVPEGFKVREMRGKLAIGITANFVNGRTVEETQVPEISGVARIYNQSFFQSLLKATGIDLENIVYYKDDTHYFVMTAKKQCLLRLGVLRQDWPDTNRLLGSANVVPEALQRFTRAAADFATHGKLGKLEFAQDAHGQPDVSAFDFTSMMRAESSARVQEKHGARLLLGLVGDCLVEPFWPLGTGVARGFLAAFDAAWMVKRWAEGAESLEVLAERESLYQLLSQTSPENMHRNVAQYGLDPATRYPNLNLRAVTPNQVRDLYDVLAKEPVQRNNDKTDTGMPATGSAGTQEELLRWCQEQTAGYPGVHVSDLSSSWADGLALCALVYRLQPGLLEPSELQGLGALEATAWALKVAENELGITPVVSAQAVVAGSDPLGLIAYLSHFHSAFKSMAHSPGPVSQASPGTSSAVLFLSKLQRTLQRSRAKENAEDAGGKKLRLEMEAETPSTEVPPDPEPGVPLTPPSQHQEAGAGDLCALCGEHLYVLERLCVNGHFFHRSCFRCHTCEATLWPGGYEQHPGDGHFYCLQHLPQTDHKAEGSDRGPESPELPTPSENSMPPGLSTPTASQEGAGPVPDPSQPTRRQIRLSSPERQRLSSLNLTPDPEMEPPPKPPRSCSALARHALESSFVGWGLPVQSPQALVAMEKEEKESPFSSEEEEEDVPLDSDVEQALQTFAKTSGTMNNYPTWRRTLLRRAKEEEMKRFCKAQTIQRRLNEIEAALRELEAEGVKLELALRRQSSSPEQQKKLWVGQLLQLVDKKNSLVAEEAELMITVQELNLEEKQWQLDQELRGYMNREENLKTAADRQAEDQVLRKLVDLVNQRDALIRFQEERRLSELALGTGAQG.

The tract at residues 1–489 is monooxygenase domain; the sequence is MASPTSTNPA…RDLYDVLAKE (489 aa). FAD is bound by residues C95, 114–116, 121–123, F181, Y293, and D393; these read EKR and RHN. Residue T475 is modified to Phosphothreonine. In terms of domain architecture, Calponin-homology (CH) spans 508 to 612; it reads AGTQEELLRW…YLSHFHSAFK (105 aa). The residue at position 617 (S617) is a Phosphoserine. A disordered region spans residues 645 to 688; the sequence is SRAKENAEDAGGKKLRLEMEAETPSTEVPPDPEPGVPLTPPSQH. Over residues 646-663 the composition is skewed to basic and acidic residues; it reads RAKENAEDAGGKKLRLEM. The stretch at 646 to 666 forms a coiled coil; the sequence is RAKENAEDAGGKKLRLEMEAE. The segment covering 671–684 has biased composition (pro residues); it reads EVPPDPEPGVPLTP. Residues 695–757 enclose the LIM zinc-binding domain; the sequence is DLCALCGEHL…LQHLPQTDHK (63 aa). C697, C700, H718, C721, C724, C727, C747, and H750 together coordinate Zn(2+). Over residues 755-766 the composition is skewed to basic and acidic residues; sequence DHKAEGSDRGPE. 2 disordered regions span residues 755–838 and 867–886; these read DHKA…RSCS and KEEK…VPLD. Residues 773 to 789 are compositionally biased toward polar residues; sequence PSENSMPPGLSTPTASQ. 3 positions are modified to phosphoserine: S872, S875, and S876. Over residues 876 to 886 the composition is skewed to acidic residues; sequence SEEEEEDVPLD. Residues 901 to 1067 are important for interaction with RAB8A; sequence GTMNNYPTWR…ELALGTGAQG (167 aa). Positions 918-1067 constitute a bMERB domain; the sequence is KEEEMKRFCK…ELALGTGAQG (150 aa). Coiled coils occupy residues 919 to 962 and 999 to 1027; these read EEEM…QSSS and NLEE…AADR. S1057 bears the Phosphoserine mark.

The protein belongs to the Mical family. In terms of assembly, interacts with STK38 and STK38L. Interacts with RAB1B, RAB8A, RAB10, RAB13, RAB15 and RAB35 (in their GTP-bound forms); binding to RAB1B is of low affinity compared to other Rab proteins; at least in case of RAB8A and RAB10 can bind 2 molecules of the Rab proteins simultaneously; ternary complex formation of RAB8A, RAB13 and MICAL1 is possible. Associates with the SH3 domain of NEDD9. Interacts with VIM and PLXNA3. Interacts with GRAF1/ARHGAP26, GRAF2/ARHGAP10, RAB8A, RAB8B and RAB10; may bind simultaneously to GRAFs and Rabs and connects GRAFs to Rabs. Does not interact with RAB1 and RAB11A. FAD is required as a cofactor. Expressed in the thymus, lung, spleen, kidney, testis and hematopoietic cells.

It is found in the cytoplasm. The protein resides in the cytoskeleton. It localises to the endosome membrane. The protein localises to the midbody. The enzyme catalyses L-methionyl-[F-actin] + NADPH + O2 + H(+) = L-methionyl-(R)-S-oxide-[F-actin] + NADP(+) + H2O. It carries out the reaction NADPH + O2 + H(+) = H2O2 + NADP(+). Its function is as follows. Monooxygenase that promotes depolymerization of F-actin by mediating oxidation of specific methionine residues on actin to form methionine-sulfoxide, resulting in actin filament disassembly and preventing repolymerization. In the absence of actin, it also functions as a NADPH oxidase producing H(2)O(2). Acts as a cytoskeletal regulator that connects NEDD9 to intermediate filaments. Also acts as a negative regulator of apoptosis via its interaction with STK38 and STK38L; acts by antagonizing STK38 and STK38L activation by MST1/STK4. Involved in regulation of lamina-specific connectivity in the nervous system such as the development of lamina-restricted hippocampal connections. Through redox regulation of the actin cytoskeleton controls the intracellular distribution of secretory vesicles containing L1/neurofascin/NgCAM family proteins in neurons, thereby regulating their cell surface levels. May act as Rab effector protein and play a role in vesicle trafficking. Promotes endosomal tubule extension by associating with RAB8 (RAB8A or RAB8B), RAB10 and GRAF (GRAF1/ARHGAP26 or GRAF2/ARHGAP10) on the endosomal membrane which may connect GRAFs to Rabs, thereby participating in neosynthesized Rab8-Rab10-Rab11-dependent protein export. This is [F-actin]-monooxygenase MICAL1 (MICAL1) from Homo sapiens (Human).